Here is a 782-residue protein sequence, read N- to C-terminus: Coiled-coil alpha-helical rod protein 1 (782 aa).

Basic and acidic residues-rich tracts occupy residues 62 to 74 (ERDV…EPGR) and 208 to 218 (ETRRAGEAKEL). Disordered regions lie at residues 62 to 82 (ERDV…WGLE) and 191 to 218 (SSLT…AKEL). Coiled coils occupy residues 82–314 (EGSQ…ELTR), 344–435 (LMVQ…VVNA), and 498–691 (VADV…QQEG).

It localises to the cytoplasm. The protein localises to the nucleus. In terms of biological role, may be a regulator of keratinocyte proliferation or differentiation. The protein is Coiled-coil alpha-helical rod protein 1 (CCHCR1) of Pongo pygmaeus (Bornean orangutan).